A 484-amino-acid chain; its full sequence is Arginine ADP-riboxanase OspC3 (484 aa).

The NAD(+) site is built by His143, Gln144, Ser145, Asn155, Lys157, Thr169, Asn172, and Thr173. Glu326 is a catalytic residue. ANK repeat units follow at residues 369 to 398 (MAHQALAYSLGNKKADIALYLLSKFNFTKQ), 413 to 444 (NLYDVEYLLSKDGANYKVLEYFINNGLVDVNK), and 451 to 480 (SGDTMLDNAMKSKDSKMIDFLLKNGAILGK).

It belongs to the OspC family. In terms of assembly, interacts with host calmodulin (CALM1, CALM2 and/or CALM3); specifically interacts with the apo form of calmodulin, preventing calcium-binding.

Its subcellular location is the secreted. The protein resides in the host cytoplasm. The enzyme catalyses L-arginyl-[protein] + NAD(+) = ADP-riboxanated L-argininyl-[protein] + nicotinamide + NH4(+) + H(+). With respect to regulation, interaction with host calmodulin (CALM1, CALM2 and/or CALM3) is required to mediate arginine ADP-riboxanation of host caspases. ADP-riboxanase effector that inhibits host cell pyroptosis. Acts by mediating arginine ADP-riboxanation of host CASP4/CASP11, blocking CASP4/CASP11 autoprocessing. This prevents CASP4 activation and ability to recognize and cleave GSDMD, thereby inhibiting LPS-induced pyroptosis. ADP-riboxanation takes place in two steps: OspC3 first catalyzes ADP-ribosylation of target Arg, and then initiates a deamination to remove one N-omega group. Independently of its ADP-riboxanase activity, acts as an inhibitor of calcium signaling by inhibiting host calmodulin, preventing activation of the JAK-STAT signaling pathway in response to interferon-beta. Mechanistically, acts by binding to the apo form of calmodulin, preventing calcium-binding and ability to activate host CaMK2 (CAMKII), which is required to stimulate the JAK-STAT signaling pathway in response to interferon-beta. The chain is Arginine ADP-riboxanase OspC3 from Shigella flexneri.